A 409-amino-acid chain; its full sequence is Elongation factor Tu (409 aa).

Residues 10 to 214 enclose the tr-type G domain; it reads KPHLNIGTIG…AVDSFIPTPE (205 aa). The interval 19 to 26 is G1; that stretch reads GHVDHGKT. 19–26 is a GTP binding site; sequence GHVDHGKT. Residue Thr26 participates in Mg(2+) binding. The tract at residues 60–64 is G2; it reads GITIN. The interval 81 to 84 is G3; sequence DCPG. Residues 81-85 and 136-139 contribute to the GTP site; these read DCPGH and NKED. A G4 region spans residues 136-139; it reads NKED. The segment at 174–176 is G5; sequence SGL.

Belongs to the TRAFAC class translation factor GTPase superfamily. Classic translation factor GTPase family. EF-Tu/EF-1A subfamily. Monomer.

The protein localises to the cytoplasm. The enzyme catalyses GTP + H2O = GDP + phosphate + H(+). In terms of biological role, GTP hydrolase that promotes the GTP-dependent binding of aminoacyl-tRNA to the A-site of ribosomes during protein biosynthesis. The chain is Elongation factor Tu from Nostoc punctiforme (strain ATCC 29133 / PCC 73102).